The following is a 359-amino-acid chain: MSSQLIPATRRVLNNAPLLDAAHGKTPTRTPVWFMRQAGRSLPEYLKVREGISMLDSCFMPELLAEITMQPVRRHDVDAAILFSDIVVPLRAAGVGVEIVPGRGPVMDQPVRTRADIDNLPILDHEVTEVSKGISIILDELTDTQALIGFAGAPFTLASYLVEGGPSKNHERTKAMIHAEPETWHALMERLVPTVVNFLKTQIDAGIDAMQLFDSWAGFLTERDYTEHVLPYSTRILQEVEQYQLPRIHFGVGTGELLGAMSRAGSEVMGVDWRVPLDKAAERIAAVSGPKVLQGNLDPALLFAGTEPLTREINRIKGEAAAAIAAGNATGHIFNLGHGVLPNTVAENITEAVSIIHAS.

Residues Arg-36–Arg-40, Asp-85, Tyr-160, Ser-215, and His-338 each bind substrate.

The protein belongs to the uroporphyrinogen decarboxylase family. As to quaternary structure, homodimer.

Its subcellular location is the cytoplasm. It catalyses the reaction uroporphyrinogen III + 4 H(+) = coproporphyrinogen III + 4 CO2. It participates in porphyrin-containing compound metabolism; protoporphyrin-IX biosynthesis; coproporphyrinogen-III from 5-aminolevulinate: step 4/4. In terms of biological role, catalyzes the decarboxylation of four acetate groups of uroporphyrinogen-III to yield coproporphyrinogen-III. The sequence is that of Uroporphyrinogen decarboxylase from Corynebacterium efficiens (strain DSM 44549 / YS-314 / AJ 12310 / JCM 11189 / NBRC 100395).